Here is a 1157-residue protein sequence, read N- to C-terminus: uncharacterized protein (1157 aa).

An N-terminal signal peptide occupies residues 1–18; it reads MNRNIFITLLISLLALSG. Residue cysteine 19 is the site of N-palmitoyl cysteine attachment. Cysteine 19 is lipidated: S-diacylglycerol cysteine. 4 helical membrane-spanning segments follow: residues 292–312, 394–414, 423–443, and 458–478; these read LSVSALLTLYIMFTGFSFLIG, LGFIYIILYLIALYFIFLLIF, ALITIGMIITMAPIFICFMLF, and ISYAIQPIILFVGIAFIGMII. Residues 1134-1157 are disordered; that stretch reads QYQKPVENSGRKLRKLEDHLRNMK. Residues 1148 to 1157 are compositionally biased toward basic and acidic residues; the sequence is KLEDHLRNMK.

Belongs to the TrbL/VirB6 family.

It localises to the cell membrane. This is an uncharacterized protein from Rickettsia bellii (strain RML369-C).